We begin with the raw amino-acid sequence, 250 residues long: CCN family member 5 (250 aa).

Residues 1–23 (MRGSPLIRLLATSFLCLLSMVCA) form the signal peptide. Disulfide bonds link Cys22–Cys50, Cys26–Cys52, Cys32–Cys53, Cys39–Cys56, Cys64–Cys78, and Cys70–Cys100. The region spanning 24–103 (QLCRTPCTCP…DEDDGDCEVN (80 aa)) is the IGFBP N-terminal domain. One can recognise a VWFC domain in the interval 98-164 (GDCEVNGRRY…GKCCPEWVCD (67 aa)). The TSP type-1 domain maps to 194-238 (WPNWSTAWGPCSTTCGLGIATRVSNQNRFCQLEIQRRLCLPRPCL). N-linked (GlcNAc...) asparagine glycosylation is present at Asn196.

This sequence belongs to the CCN family.

It is found in the secreted. Its function is as follows. May play an important role in modulating bone turnover. Promotes the adhesion of osteoblast cells and inhibits the binding of fibrinogen to integrin receptors. In addition, inhibits osteocalcin production. The chain is CCN family member 5 (Ccn5) from Rattus norvegicus (Rat).